Reading from the N-terminus, the 1104-residue chain is Transient receptor potential cation channel subfamily M member 8 (1104 aa).

Residues 1 to 22 are disordered; that stretch reads MSFEGARLSMRSRRNGTMGSTR. At 1 to 733 the chain is on the cytoplasmic side; the sequence is MSFEGARLSM…LWYYVAFFTS (733 aa). Residues 734–758 traverse the membrane as a helical segment; the sequence is PFVVFSWNVVFYIAFLLLFAYVLLM. Residues 759-765 lie on the Extracellular side of the membrane; that stretch reads DFHSVPH. The chain crosses the membrane as a helical span at residues 766–789; that stretch reads TPELILYALVFVLFCDEVRQWYMN. The Ca(2+) site is built by glutamate 782 and glutamine 785. Topologically, residues 790-796 are cytoplasmic; the sequence is GVNYFTD. The helical transmembrane segment at 797 to 817 threads the bilayer; that stretch reads LWNVMDTLGLFYFIAGIVFRL. The Ca(2+) site is built by asparagine 799 and aspartate 802. The Extracellular portion of the chain corresponds to 818 to 822; it reads HSSNK. A helical transmembrane segment spans residues 823–848; the sequence is SSLYSGRVIFCLDYIIFTLRLIHIFT. Residues 849 to 853 lie on the Cytoplasmic side of the membrane; the sequence is VSRNL. The helical transmembrane segment at 854–890 threads the bilayer; that stretch reads GPKIIMLQRMLIDVFFFLFLFAVWMVAFGVARQGILR. Over 891–895 the chain is Extracellular; the sequence is QNEQR. Residues 896-912 constitute an intramembrane region (pore-forming); sequence WRWIFRSVIYEPYLAMF. The Extracellular portion of the chain corresponds to 913–953; that stretch reads GQVPSDVDSTTYDFSHCTFSGNESKPLCVELDEHNLPRFPE. The N-linked (GlcNAc...) (complex) asparagine glycan is linked to asparagine 934. Residues 954 to 984 form a helical membrane-spanning segment; it reads WITIPLVCIYMLSTNILLVNLLVAMFGYTVG. Residues 985–1104 lie on the Cytoplasmic side of the membrane; the sequence is IVQENNDQVW…LLKEIANNIK (120 aa). Residues 1069–1104 adopt a coiled-coil conformation; that stretch reads TKANDNSEEMRHRFRQLDSKLNDLKSLLKEIANNIK.

It belongs to the transient receptor (TC 1.A.4) family. LTrpC subfamily. TRPM8 sub-subfamily. In terms of assembly, homotetramer. Interacts (via N-terminus and C-terminus domains) with TCAF1; the interaction stimulates TRPM8 channel activity. Interacts (via N-terminus and C-terminus domains) with TCAF2; the interaction inhibits TRPM8 channel activity. N-glycosylation is not essential for but facilitates cell surface expression, multimerization, association with lipid rafts and ion channel activity. In terms of tissue distribution, expressed in dorsal root and trigeminal ganglia. Specifically expressed in a subset of pain- and temperature-sensing neurons. Not expressed in heavily myelinated neurons. Not expressed in neurons expressing TRPA1 or TRPV1.

Its subcellular location is the cell membrane. The protein resides in the membrane raft. It catalyses the reaction Ca(2+)(in) = Ca(2+)(out). The enzyme catalyses Na(+)(in) = Na(+)(out). It carries out the reaction K(+)(in) = K(+)(out). Activated by cold temperatures and by both natural and synthetic cooling compounds such as menthol and icilin. Activation of the channel requires the presence of PI(4,5)P2; PI(4,5)P2 is necessary to gate the channel. Activated by intracellular Ca(2+). Its function is as follows. Non-selective ion channel permeable to monovalent and divalent cations, including Na(+), K(+), and Ca(2+), with higher permeability for Ca(2+). Activated by multiple factors, such as temperature, voltage, pressure, and changes in osmolality. Activated by cool temperatures (&lt;23-28 degrees Celsius) and by chemical ligands evoking a sensation of coolness, such as menthol and icilin, therefore plays a central role in the detection of environmental cold temperatures. TRPM8 is a voltage-dependent channel; its activation by cold or chemical ligands shifts its voltage thresholds towards physiological membrane potentials, leading to the opening of the channel. In addition to its critical role in temperature sensing, regulates basal tear secretion by sensing evaporation-induced cooling and changes in osmolality. The polypeptide is Transient receptor potential cation channel subfamily M member 8 (Trpm8) (Mus musculus (Mouse)).